The primary structure comprises 354 residues: UDP-N-acetylglucosamine--N-acetylmuramyl-(pentapeptide) pyrophosphoryl-undecaprenol N-acetylglucosamine transferase (354 aa).

UDP-N-acetyl-alpha-D-glucosamine is bound by residues 11-13 (TGG), Asn117, Arg160, Ser186, and Gln288.

Belongs to the glycosyltransferase 28 family. MurG subfamily.

It localises to the cell inner membrane. The enzyme catalyses di-trans,octa-cis-undecaprenyl diphospho-N-acetyl-alpha-D-muramoyl-L-alanyl-D-glutamyl-meso-2,6-diaminopimeloyl-D-alanyl-D-alanine + UDP-N-acetyl-alpha-D-glucosamine = di-trans,octa-cis-undecaprenyl diphospho-[N-acetyl-alpha-D-glucosaminyl-(1-&gt;4)]-N-acetyl-alpha-D-muramoyl-L-alanyl-D-glutamyl-meso-2,6-diaminopimeloyl-D-alanyl-D-alanine + UDP + H(+). Its pathway is cell wall biogenesis; peptidoglycan biosynthesis. Cell wall formation. Catalyzes the transfer of a GlcNAc subunit on undecaprenyl-pyrophosphoryl-MurNAc-pentapeptide (lipid intermediate I) to form undecaprenyl-pyrophosphoryl-MurNAc-(pentapeptide)GlcNAc (lipid intermediate II). The polypeptide is UDP-N-acetylglucosamine--N-acetylmuramyl-(pentapeptide) pyrophosphoryl-undecaprenol N-acetylglucosamine transferase (Rickettsia canadensis (strain McKiel)).